Reading from the N-terminus, the 185-residue chain is Ribosome maturation factor RimM (185 aa).

The PRC barrel domain occupies 108–183 (PGEFHVTDLL…RLEIKTIPGL (76 aa)).

Belongs to the RimM family. Binds ribosomal protein uS19.

The protein resides in the cytoplasm. An accessory protein needed during the final step in the assembly of 30S ribosomal subunit, possibly for assembly of the head region. Essential for efficient processing of 16S rRNA. May be needed both before and after RbfA during the maturation of 16S rRNA. It has affinity for free ribosomal 30S subunits but not for 70S ribosomes. This is Ribosome maturation factor RimM from Synechocystis sp. (strain ATCC 27184 / PCC 6803 / Kazusa).